The primary structure comprises 521 residues: Bifunctional purine biosynthesis protein PurH (521 aa).

An MGS-like domain is found at 1 to 145; that stretch reads MIKQALISVS…KNHRDVTVVV (145 aa).

Belongs to the PurH family.

It catalyses the reaction (6R)-10-formyltetrahydrofolate + 5-amino-1-(5-phospho-beta-D-ribosyl)imidazole-4-carboxamide = 5-formamido-1-(5-phospho-D-ribosyl)imidazole-4-carboxamide + (6S)-5,6,7,8-tetrahydrofolate. The enzyme catalyses IMP + H2O = 5-formamido-1-(5-phospho-D-ribosyl)imidazole-4-carboxamide. It functions in the pathway purine metabolism; IMP biosynthesis via de novo pathway; 5-formamido-1-(5-phospho-D-ribosyl)imidazole-4-carboxamide from 5-amino-1-(5-phospho-D-ribosyl)imidazole-4-carboxamide (10-formyl THF route): step 1/1. Its pathway is purine metabolism; IMP biosynthesis via de novo pathway; IMP from 5-formamido-1-(5-phospho-D-ribosyl)imidazole-4-carboxamide: step 1/1. This Paraburkholderia phytofirmans (strain DSM 17436 / LMG 22146 / PsJN) (Burkholderia phytofirmans) protein is Bifunctional purine biosynthesis protein PurH.